Reading from the N-terminus, the 578-residue chain is Probable ATP-dependent RNA helicase DDX55 homolog (578 aa).

A Q motif motif is present at residues 7-37 (PVALKTFREKLGPELLEVFDKSYKSFTDVQV). In terms of domain architecture, Helicase ATP-binding spans 40-218 (GTHLLNLSDV…VFGLRNAKQV (179 aa)). 53–60 (SPTGSGKT) provides a ligand contact to ATP. The short motif at 166-169 (DEAD) is the DEAD box element. The Helicase C-terminal domain occupies 231–393 (TLKNYYVECR…EIKVPTNNSR (163 aa)). Residues 507–557 (AAKDKKRREKEARKLKKMGGRFRNGGGTGRKAEEKKALKRKAEEEDDAQND) form a disordered region. Basic residues predominate over residues 510 to 526 (DKKRREKEARKLKKMGG). Basic and acidic residues predominate over residues 536 to 549 (RKAEEKKALKRKAE).

Belongs to the DEAD box helicase family. DDX55/SPB4 subfamily.

It carries out the reaction ATP + H2O = ADP + phosphate + H(+). Probable ATP-binding RNA helicase. This chain is Probable ATP-dependent RNA helicase DDX55 homolog, found in Caenorhabditis elegans.